A 787-amino-acid polypeptide reads, in one-letter code: Endonuclease MutS2 (787 aa).

334–341 serves as a coordination point for ATP; it reads GPNTGGKT. Residues 685–709 form a disordered region; the sequence is KAQDPAKSAKQPRASVKRSGSSGMS. Residues 712-787 enclose the Smr domain; it reads LDLRGHRYEE…GDGSTVVHFK (76 aa).

Belongs to the DNA mismatch repair MutS family. MutS2 subfamily. In terms of assembly, homodimer. Binds to stalled ribosomes, contacting rRNA.

Functionally, endonuclease that is involved in the suppression of homologous recombination and thus may have a key role in the control of bacterial genetic diversity. In terms of biological role, acts as a ribosome collision sensor, splitting the ribosome into its 2 subunits. Detects stalled/collided 70S ribosomes which it binds and splits by an ATP-hydrolysis driven conformational change. Acts upstream of the ribosome quality control system (RQC), a ribosome-associated complex that mediates the extraction of incompletely synthesized nascent chains from stalled ribosomes and their subsequent degradation. Probably generates substrates for RQC. The polypeptide is Endonuclease MutS2 (Levilactobacillus brevis (strain ATCC 367 / BCRC 12310 / CIP 105137 / JCM 1170 / LMG 11437 / NCIMB 947 / NCTC 947) (Lactobacillus brevis)).